We begin with the raw amino-acid sequence, 548 residues long: Chaperonin GroEL (548 aa).

Residues threonine 30–proline 33, lysine 51, aspartate 87–threonine 91, glycine 415, and aspartate 495 contribute to the ATP site.

It belongs to the chaperonin (HSP60) family. As to quaternary structure, forms a cylinder of 14 subunits composed of two heptameric rings stacked back-to-back. Interacts with the co-chaperonin GroES.

Its subcellular location is the cytoplasm. It catalyses the reaction ATP + H2O + a folded polypeptide = ADP + phosphate + an unfolded polypeptide.. Functionally, together with its co-chaperonin GroES, plays an essential role in assisting protein folding. The GroEL-GroES system forms a nano-cage that allows encapsulation of the non-native substrate proteins and provides a physical environment optimized to promote and accelerate protein folding. The polypeptide is Chaperonin GroEL (Idiomarina loihiensis (strain ATCC BAA-735 / DSM 15497 / L2-TR)).